The following is a 124-amino-acid chain: Putative iron-sulfur cluster insertion protein ErpA 2 (124 aa).

Positions 52, 116, and 118 each coordinate iron-sulfur cluster.

It belongs to the HesB/IscA family. In terms of assembly, homodimer. Iron-sulfur cluster is required as a cofactor.

Functionally, required for insertion of 4Fe-4S clusters. In Burkholderia vietnamiensis (strain G4 / LMG 22486) (Burkholderia cepacia (strain R1808)), this protein is Putative iron-sulfur cluster insertion protein ErpA 2.